Here is a 576-residue protein sequence, read N- to C-terminus: MLRLNGLRVLLRTLAAIGALLTTASASAACADLLALSLPSTTISSATDVPAGAFTAPDGTVLDALPAFCRVVGVSRPASDSEIGFEVWIPSAGWNQNYLQVGTVVFAGNIQYRSLGFALRRGYATATTDGGHRASIGDASFARGHPQKILDWGYQALATTISNGKALVSAYTHRAPHYSYFFGASNGGRDALIAAQRFPGAFDGIIADAPSSAWVHNAFSWLWSQDAQFGSPAATISAAKLPAIQAAALAQCDAKDHTADGVVNDPRRCRFDPRVLLCSGAESDACLTAPQLQTLAAILAGPVNPRTGERIYYGFEPFAVATPGTWNQWITGNAAVPGGGHAVLANQFFANMVFDTGSAGFDHTQVNFDTDVARAERKPVAGQPLASVIDATSADLSGFRARNGKMILYIGWEDPVVPPRGAITYYESVVARQWLDNPQISRAEDALAQTQQFFRLFMVPGMGHFTGGPGTSAFGALYGPPALAIDRQHDVLAAMEAWVEQGIAPERIVAAKYANDDPAKGVVRTRPLCHYPQSAVWIGQGSAEDAQNFICVDSPRGAYLDAAPARAPLPSSAQSR.

An N-terminal signal peptide occupies residues 1–28 (MLRLNGLRVLLRTLAAIGALLTTASASA). Serine 185 serves as the catalytic Acyl-ester intermediate. Cystine bridges form between cysteine 252/cysteine 269 and cysteine 278/cysteine 286. Ca(2+)-binding residues include aspartate 253, aspartate 256, aspartate 260, and valine 262. Catalysis depends on charge relay system residues aspartate 414 and histidine 464. Cysteine 529 and cysteine 551 are joined by a disulfide.

It belongs to the tannase family.

This is an uncharacterized protein from Xanthomonas campestris pv. campestris (strain ATCC 33913 / DSM 3586 / NCPPB 528 / LMG 568 / P 25).